The chain runs to 384 residues: 8-amino-7-oxononanoate synthase (384 aa).

Substrate is bound at residue R21. A pyridoxal 5'-phosphate-binding site is contributed by 108 to 109 (GF). H133 contributes to the substrate binding site. 3 residues coordinate pyridoxal 5'-phosphate: S179, H207, and T233. N6-(pyridoxal phosphate)lysine is present on K236. T352 is a binding site for substrate.

The protein belongs to the class-II pyridoxal-phosphate-dependent aminotransferase family. BioF subfamily. As to quaternary structure, homodimer. Pyridoxal 5'-phosphate is required as a cofactor.

It carries out the reaction 6-carboxyhexanoyl-[ACP] + L-alanine + H(+) = (8S)-8-amino-7-oxononanoate + holo-[ACP] + CO2. Its pathway is cofactor biosynthesis; biotin biosynthesis. Catalyzes the decarboxylative condensation of pimeloyl-[acyl-carrier protein] and L-alanine to produce 8-amino-7-oxononanoate (AON), [acyl-carrier protein], and carbon dioxide. The sequence is that of 8-amino-7-oxononanoate synthase from Shigella boydii serotype 18 (strain CDC 3083-94 / BS512).